Consider the following 457-residue polypeptide: tRNA modification GTPase MnmE (457 aa).

(6S)-5-formyl-5,6,7,8-tetrahydrofolate contacts are provided by Arg25, Glu87, and Arg126. In terms of domain architecture, TrmE-type G spans 223–377 (GISTAIIGRP…IEERINNLFF (155 aa)). K(+) is bound at residue Asn233. Residues 233–238 (NVGKSS), 252–258 (TDIAGTT), and 277–280 (DTAG) each bind GTP. Ser237 provides a ligand contact to Mg(2+). K(+) contacts are provided by Thr252, Ile254, and Thr257. Thr258 serves as a coordination point for Mg(2+). Position 457 (Lys457) interacts with (6S)-5-formyl-5,6,7,8-tetrahydrofolate.

Belongs to the TRAFAC class TrmE-Era-EngA-EngB-Septin-like GTPase superfamily. TrmE GTPase family. As to quaternary structure, homodimer. Heterotetramer of two MnmE and two MnmG subunits. K(+) is required as a cofactor.

Its subcellular location is the cytoplasm. Its function is as follows. Exhibits a very high intrinsic GTPase hydrolysis rate. Involved in the addition of a carboxymethylaminomethyl (cmnm) group at the wobble position (U34) of certain tRNAs, forming tRNA-cmnm(5)s(2)U34. This chain is tRNA modification GTPase MnmE, found in Streptococcus pneumoniae serotype 2 (strain D39 / NCTC 7466).